Here is a 219-residue protein sequence, read N- to C-terminus: Elongation factor Ts (219 aa).

Residues 82–85 (TDFV) form an involved in Mg(2+) ion dislocation from EF-Tu region.

The protein belongs to the EF-Ts family.

It localises to the cytoplasm. Functionally, associates with the EF-Tu.GDP complex and induces the exchange of GDP to GTP. It remains bound to the aminoacyl-tRNA.EF-Tu.GTP complex up to the GTP hydrolysis stage on the ribosome. This Trichodesmium erythraeum (strain IMS101) protein is Elongation factor Ts.